The following is a 228-amino-acid chain: UPF0758 protein H16_A3033 (228 aa).

Positions 102-224 (GFDGPAAVRN…IRSLADCCDR (123 aa)) constitute an MPN domain. Residues H173, H175, and D186 each coordinate Zn(2+). The JAMM motif signature appears at 173–186 (HNHPRGTTAPSQSD).

The protein belongs to the UPF0758 family.

In Cupriavidus necator (strain ATCC 17699 / DSM 428 / KCTC 22496 / NCIMB 10442 / H16 / Stanier 337) (Ralstonia eutropha), this protein is UPF0758 protein H16_A3033.